The following is a 449-amino-acid chain: UDP-N-acetylmuramoylalanine--D-glutamate ligase (449 aa).

119–125 (GTNGKTT) lines the ATP pocket.

This sequence belongs to the MurCDEF family.

It localises to the cytoplasm. It carries out the reaction UDP-N-acetyl-alpha-D-muramoyl-L-alanine + D-glutamate + ATP = UDP-N-acetyl-alpha-D-muramoyl-L-alanyl-D-glutamate + ADP + phosphate + H(+). Its pathway is cell wall biogenesis; peptidoglycan biosynthesis. Functionally, cell wall formation. Catalyzes the addition of glutamate to the nucleotide precursor UDP-N-acetylmuramoyl-L-alanine (UMA). The chain is UDP-N-acetylmuramoylalanine--D-glutamate ligase from Lactococcus lactis subsp. cremoris (strain MG1363).